We begin with the raw amino-acid sequence, 414 residues long: Histidine--tRNA ligase (414 aa).

Belongs to the class-II aminoacyl-tRNA synthetase family. As to quaternary structure, homodimer.

The protein resides in the cytoplasm. The catalysed reaction is tRNA(His) + L-histidine + ATP = L-histidyl-tRNA(His) + AMP + diphosphate + H(+). The protein is Histidine--tRNA ligase of Ehrlichia ruminantium (strain Gardel).